We begin with the raw amino-acid sequence, 569 residues long: Pyruvate decarboxylase (569 aa).

Pyruvate-binding residues include D38 and H124. Residues T398 and 421–423 each bind thiamine diphosphate; that span reads GSI. Position 451 (D451) interacts with Mg(2+). Thiamine diphosphate-binding positions include 452 to 453 and 478 to 483; these read GS and NQGYTI. Mg(2+) contacts are provided by N478 and G480. E484 contacts pyruvate.

The protein belongs to the TPP enzyme family. In terms of assembly, homotetramer. Mg(2+) serves as cofactor. The cofactor is thiamine diphosphate.

It carries out the reaction a 2-oxocarboxylate + H(+) = an aldehyde + CO2. It catalyses the reaction pyruvate + H(+) = acetaldehyde + CO2. This is Pyruvate decarboxylase (pdcA) from Aspergillus terreus (strain NIH 2624 / FGSC A1156).